Consider the following 117-residue polypeptide: UPF0122 protein Cthe_0771 (117 aa).

This sequence belongs to the UPF0122 family.

Might take part in the signal recognition particle (SRP) pathway. This is inferred from the conservation of its genetic proximity to ftsY/ffh. May be a regulatory protein. This is UPF0122 protein Cthe_0771 from Acetivibrio thermocellus (strain ATCC 27405 / DSM 1237 / JCM 9322 / NBRC 103400 / NCIMB 10682 / NRRL B-4536 / VPI 7372) (Clostridium thermocellum).